Reading from the N-terminus, the 303-residue chain is MFGKKNLKWLGVVATLMMTFVQLGGALVTKTGSADGCGSSWPLCHGALIPEFFPIDTIIELSHRAVSALSLLMVLWLVITAWKHIGYIKEIKPLSIISVGFLLLQALIGAAAVIWQQNDYVLALHFGISLISFSSVFLITLIIFSIDQKYEADELYIKKPLRRLTWLMAIIIYCGVYTGALVRHADASLAYGGWPLPFHDLVPHSEQDWVQLTHRIMAFIVFTIIMITYIHAVKNYPNNRTVHYGYTAAFILVILQVITGALSIMTNVNLIIALFHALFITYLFGMTTYFIMLMLRSVRSDKQ.

Over 1–8 (MFGKKNLK) the chain is Cytoplasmic. A helical membrane pass occupies residues 9 to 29 (WLGVVATLMMTFVQLGGALVT). Topologically, residues 30 to 67 (KTGSADGCGSSWPLCHGALIPEFFPIDTIIELSHRAVS) are extracellular. A disulfide bond links Cys37 and Cys44. Glu60 is a catalytic residue. Heme o is bound at residue His63. A helical transmembrane segment spans residues 68–88 (ALSLLMVLWLVITAWKHIGYI). At 89–93 (KEIKP) the chain is on the cytoplasmic side. The chain crosses the membrane as a helical span at residues 94 to 114 (LSIISVGFLLLQALIGAAAVI). Over 115 to 125 (WQQNDYVLALH) the chain is Extracellular. His125 is a binding site for heme o. A helical membrane pass occupies residues 126 to 146 (FGISLISFSSVFLITLIIFSI). The Cytoplasmic segment spans residues 147–163 (DQKYEADELYIKKPLRR). A helical membrane pass occupies residues 164–184 (LTWLMAIIIYCGVYTGALVRH). At 185–215 (ADASLAYGGWPLPFHDLVPHSEQDWVQLTHR) the chain is on the extracellular side. His214 is a binding site for heme b. The chain crosses the membrane as a helical span at residues 216 to 236 (IMAFIVFTIIMITYIHAVKNY). The Cytoplasmic portion of the chain corresponds to 237 to 244 (PNNRTVHY). Residues 245 to 265 (GYTAAFILVILQVITGALSIM) traverse the membrane as a helical segment. The Extracellular portion of the chain corresponds to 266–270 (TNVNL). Residues 271–291 (IIALFHALFITYLFGMTTYFI) traverse the membrane as a helical segment. Residue His276 participates in heme b binding. At 292–303 (MLMLRSVRSDKQ) the chain is on the cytoplasmic side.

This sequence belongs to the COX15/CtaA family. Type 1 subfamily. As to quaternary structure, interacts with CtaB. The cofactor is heme b.

It localises to the cell membrane. The enzyme catalyses Fe(II)-heme o + 2 A + H2O = Fe(II)-heme a + 2 AH2. The protein operates within porphyrin-containing compound metabolism; heme A biosynthesis; heme A from heme O: step 1/1. In terms of biological role, catalyzes the conversion of heme O to heme A by two successive hydroxylations of the methyl group at C8. The first hydroxylation forms heme I, the second hydroxylation results in an unstable dihydroxymethyl group, which spontaneously dehydrates, resulting in the formyl group of heme A. This is Heme A synthase from Staphylococcus aureus (strain Mu3 / ATCC 700698).